A 316-amino-acid chain; its full sequence is MVNQSSPMGFLLLGFSEHPALERTLFVVVFTSYLLTLVGNTLIILLSVLYPRLHSPMYFFLSDLSFLDLCFTTSCVPQMLVNLWGPKKTISFLGCSVQLFIFLSLGTTECILLTVMAFDRYVAVCQPLHYATIIHPRLCWQLASVAWVMSLVQSIVQTPSTLHLPFCPHQQIDDFLCEVPSLIRLSCGDTSYNEIQLAVSSVIFVVVPLSLILASYGATAQAVLRINSATAWRKAFGTCSSHLTVVTLFYSSVIAVYLQPKNPYAQGRGKFFGLFYAVGTPSLNPLVYTLRNKEIKRALRRLLGKERDSRESWRAA.

Over 1-23 the chain is Extracellular; it reads MVNQSSPMGFLLLGFSEHPALER. Residue asparagine 3 is glycosylated (N-linked (GlcNAc...) asparagine). Residues 24 to 47 form a helical membrane-spanning segment; the sequence is TLFVVVFTSYLLTLVGNTLIILLS. The Cytoplasmic segment spans residues 48–55; sequence VLYPRLHS. A helical transmembrane segment spans residues 56 to 77; it reads PMYFFLSDLSFLDLCFTTSCVP. Residues 78-98 are Extracellular-facing; that stretch reads QMLVNLWGPKKTISFLGCSVQ. Cysteine 95 and cysteine 187 are disulfide-bonded. The chain crosses the membrane as a helical span at residues 99–118; the sequence is LFIFLSLGTTECILLTVMAF. The Cytoplasmic portion of the chain corresponds to 119-137; the sequence is DRYVAVCQPLHYATIIHPR. The helical transmembrane segment at 138–156 threads the bilayer; sequence LCWQLASVAWVMSLVQSIV. Over 157-193 the chain is Extracellular; the sequence is QTPSTLHLPFCPHQQIDDFLCEVPSLIRLSCGDTSYN. The helical transmembrane segment at 194-217 threads the bilayer; sequence EIQLAVSSVIFVVVPLSLILASYG. Over 218 to 234 the chain is Cytoplasmic; it reads ATAQAVLRINSATAWRK. Residues 235–257 traverse the membrane as a helical segment; the sequence is AFGTCSSHLTVVTLFYSSVIAVY. Residues 258-270 are Extracellular-facing; the sequence is LQPKNPYAQGRGK. A helical membrane pass occupies residues 271–290; it reads FFGLFYAVGTPSLNPLVYTL. The Cytoplasmic segment spans residues 291–316; sequence RNKEIKRALRRLLGKERDSRESWRAA.

Belongs to the G-protein coupled receptor 1 family.

The protein resides in the cell membrane. Odorant receptor. The polypeptide is Olfactory receptor 2H1 (OR2H1) (Homo sapiens (Human)).